The following is a 323-amino-acid chain: MTQLRSHPRLVRKLQDSLGDQLCVALDDATVVEIMLNPDGRLFIERLGHGVVAAGAMTPAAAEVVIGSVAHALQSEADDERPIISGELPIGGHRFEGLLPPIVSGPAFTIRRRASRLIPLDDYVTSKVMTEAQASAIRSAIDSRMNIVISGGTGSGKTTLANAIIAEIVTAAPDDRLVILEDTAEIQCAAENAVSLHTSDTVDMARLLKSTMRLRPDRIIVGEVRDGAALTLLKAWNTGHPGGVTTIHSNTALSALRRLEQLTAEASQQLMQEVIGEAVDLIVSIERSGKGRRVREVIHIEGYRNNHYQTEHYAQIEEDSHVA.

151 to 158 lines the ATP pocket; sequence GGTGSGKT.

Belongs to the GSP E family.

Its subcellular location is the cytoplasm. The sequence is that of Conjugal transfer protein TrbB (trbB) from Rhizobium radiobacter (Agrobacterium tumefaciens).